The chain runs to 570 residues: Formate--tetrahydrofolate ligase (570 aa).

Threonine 65–threonine 72 contributes to the ATP binding site.

Belongs to the formate--tetrahydrofolate ligase family.

The enzyme catalyses (6S)-5,6,7,8-tetrahydrofolate + formate + ATP = (6R)-10-formyltetrahydrofolate + ADP + phosphate. It functions in the pathway one-carbon metabolism; tetrahydrofolate interconversion. The protein is Formate--tetrahydrofolate ligase of Shewanella sp. (strain ANA-3).